The chain runs to 376 residues: 1-acyl-sn-glycerol-3-phosphate acyltransferase gamma (376 aa).

The Cytoplasmic portion of the chain corresponds to 1 to 124 (MGLLAFLKTQ…LGSSKVLAKK (124 aa)). Residues 96-101 (HNFEID) carry the HXXXXD motif motif. A helical membrane pass occupies residues 125–145 (ELLYVPLIGWTWYFLEIVFCK). Over 146-316 (RKWEEDRDTV…TLLNFLSWAT (171 aa)) the chain is Lumenal. Residues 317–339 (ILLSPLFSFVLGVFASGSPLLIL) traverse the membrane as a helical segment. Residues 340 to 376 (TFLGFVGAASFGVRRLIGVTEIEKGSSYGNQEFKKKE) are Cytoplasmic-facing.

It belongs to the 1-acyl-sn-glycerol-3-phosphate acyltransferase family. In terms of tissue distribution, widely expressed with highest levels in testis, pancreas and kidney, followed by spleen, lung, adipose tissue and liver.

The protein resides in the endoplasmic reticulum membrane. It localises to the nucleus envelope. It catalyses the reaction a 1-acyl-sn-glycero-3-phosphate + an acyl-CoA = a 1,2-diacyl-sn-glycero-3-phosphate + CoA. The enzyme catalyses pentadecanoyl-CoA + 1-(9Z-octadecenoyl)-sn-glycero-3-phosphate = 1-(9Z)-octadecenoyl-2-pentadecanoyl-sn-glycero-3-phosphate + CoA. The catalysed reaction is heptadecanoyl-CoA + 1-(9Z-octadecenoyl)-sn-glycero-3-phosphate = 1-(9Z)-octadecenoyl-2-heptadecanoyl-sn-glycero-3-phosphate + CoA. It carries out the reaction 1-(9Z-octadecenoyl)-sn-glycero-3-phosphate + octadecanoyl-CoA = 1-(9Z-octadecenoyl)-2-octadecanoyl-sn-glycero-3-phosphate + CoA. It catalyses the reaction nonadecanoyl-CoA + 1-(9Z-octadecenoyl)-sn-glycero-3-phosphate = 1-(9Z)-octadecenoyl-2-nonadecanoyl-sn-glycero-3-phosphate + CoA. The enzyme catalyses 1-(9Z-octadecenoyl)-sn-glycero-3-phosphate + (5Z,8Z,11Z,14Z)-eicosatetraenoyl-CoA = 1-(9Z)-octadecenoyl-2-(5Z,8Z,11Z,14Z)-eicosatetraenoyl-sn-glycero-3-phosphate + CoA. The catalysed reaction is 1-(9Z-octadecenoyl)-sn-glycero-3-phosphate + (9Z)-octadecenoyl-CoA = 1,2-di-(9Z-octadecenoyl)-sn-glycero-3-phosphate + CoA. It carries out the reaction 1-(9Z-octadecenoyl)-sn-glycero-3-phosphate + (9Z,12Z)-octadecadienoyl-CoA = 1-(9Z)-octadecenoyl-2-(9Z,12Z)-octadecadienoyl-sn-glycero-3-phosphate + CoA. It catalyses the reaction 1-(9Z-octadecenoyl)-sn-glycero-3-phosphocholine + (5Z,8Z,11Z,14Z)-eicosatetraenoyl-CoA = 1-(9Z)-octadecenoyl-2-(5Z,8Z,11Z,14Z)-icosatetraenoyl-sn-glycero-3-phosphocholine + CoA. The enzyme catalyses 1-(9Z-octadecenoyl)-sn-glycero-3-phospho-(1D-myo-inositol) + (5Z,8Z,11Z,14Z)-eicosatetraenoyl-CoA = 1-(9Z-octadecenoyl)-2-(5Z,8Z,11Z,14Z-eicosatetraenoyl)-sn-glycero-3-phospho-1D-myo-inositol + CoA. The catalysed reaction is 1-(9Z-octadecenoyl)-sn-glycero-3-phospho-L-serine + (5Z,8Z,11Z,14Z)-eicosatetraenoyl-CoA = 1-(9Z-octadecenoyl)-2-(5Z,8Z,11Z,14Z-eicosatetraenoyl)-sn-glycero-3-phospho-L-serine + CoA. It carries out the reaction 1-hexadecanoyl-sn-glycero-3-phosphate + (9Z)-octadecenoyl-CoA = 1-hexadecanoyl-2-(9Z-octadecenoyl)-sn-glycero-3-phosphate + CoA. It catalyses the reaction 1-hexadecanoyl-sn-glycero-3-phosphate + (5Z,8Z,11Z,14Z)-eicosatetraenoyl-CoA = 1-hexadecanoyl-2-(5Z,8Z,11Z,14Z-eicosatetraenoyl)-sn-glycero-3-phosphate + CoA. The enzyme catalyses 1-heptadecanoyl-sn-glycero-3-phosphate + (5Z,8Z,11Z,14Z)-eicosatetraenoyl-CoA = 1-heptadecanoyl-2-(5Z,8Z,11Z,14Z)-eicosatetraenoyl-sn-glycero-3-phosphate + CoA. The catalysed reaction is 1-octadecanoyl-sn-glycero-3-phosphate + (9Z)-octadecenoyl-CoA = 1-octadecanoyl-2-(9Z-octadecenoyl)-sn-glycero-3-phosphate + CoA. It carries out the reaction 1-octadecanoyl-sn-glycero-3-phosphate + (5Z,8Z,11Z,14Z)-eicosatetraenoyl-CoA = 1-octadecanoyl-2-(5Z,8Z,11Z,14Z-eicosatetraenoyl)-sn-glycero-3-phosphate + CoA. It catalyses the reaction 1-(9Z-octadecenoyl)-sn-glycero-3-phosphate + hexadecanoyl-CoA = 1-hexadecanoyl-2-(9Z-octadecenoyl)-sn-glycero-3-phosphate + CoA. The enzyme catalyses 1-O-(9Z-octadecenyl)-sn-glycero-3-phosphate + (5Z,8Z,11Z,14Z)-eicosatetraenoyl-CoA = 1-O-(9Z-octadecenyl)-2-(5Z,8Z,11Z,14Z-eicosatetraenoyl)-sn-glycero-3-phosphate + CoA. The catalysed reaction is a 1-acyl-sn-glycero-3-phospho-(1D-myo-inositol) + (5Z,8Z,11Z,14Z)-eicosatetraenoyl-CoA = a 1-acyl-2-(5Z,8Z,11Z,14Z-eicosatetraenoyl)-sn-glycero-3-phospho-(1D-myo-inositol) + CoA. It functions in the pathway phospholipid metabolism; CDP-diacylglycerol biosynthesis; CDP-diacylglycerol from sn-glycerol 3-phosphate: step 2/3. Functionally, converts 1-acyl-sn-glycerol-3-phosphate (lysophosphatidic acid or LPA) into 1,2-diacyl-sn-glycerol-3-phosphate (phosphatidic acid or PA) by incorporating an acyl moiety at the sn-2 position of the glycerol backbone. Acts on LPA containing saturated or unsaturated fatty acids C16:0-C20:4 at the sn-1 position using C18:1, C20:4 or C18:2-CoA as the acyl donor. Also acts on lysophosphatidylcholine, lysophosphatidylinositol and lysophosphatidylserine using C18:1 or C20:4-CoA. Has a preference for arachidonoyl-CoA as a donor. Also has a modest lysophosphatidylinositol acyltransferase (LPIAT) activity, converts lysophosphatidylinositol (LPI) into phosphatidylinositol. This chain is 1-acyl-sn-glycerol-3-phosphate acyltransferase gamma (AGPAT3), found in Homo sapiens (Human).